Here is a 1450-residue protein sequence, read N- to C-terminus: Protein clueless (1450 aa).

2 disordered regions span residues 1–126 and 266–287; these read MALE…PGSE and KTRPDSVDCTPPEYVTPGVSEP. Low complexity predominate over residues 29 to 60; that stretch reads NNSSAGKKQQQQQQPNQNQNLVNGNGNAADGP. The span at 62 to 71 shows a compositional bias: basic residues; the sequence is AKKKGKKNRN. At Ser271 the chain carries Phosphoserine. The Clu domain maps to 425–667; that stretch reads RAEDAFSSKL…RTFPPDVNFL (243 aa). Basic and acidic residues-rich tracts occupy residues 725 to 734 and 743 to 765; these read KQSEKTEEKA and KESSETKEAEAEKPVEKKEEEKQ. Disordered regions lie at residues 725–775 and 959–1011; these read KQSE…TKTA and PAVS…SDWT. The segment covering 968–983 has biased composition (basic residues); it reads KKRSNGNKHNKHKSKG. Low complexity predominate over residues 984–1008; it reads NKQQASGNQNGSSAGSSSGGSSSSS. TPR repeat units lie at residues 1102–1135, 1228–1261, and 1263–1296; these read AYNFYTTGQAKIQQGMFKEGYELISEALNLLNNV, ALIDSNISLILHALGEYELSLRFIEHALKLNIKY, and GSKAMHVAFSYHLMARTQSCMGDFRSALNNEKET. Residues 1410-1450 are disordered; it reads NNNGDTEAETKDATKDNKDLAGASTQLTNGDKDAETAVASS. A compositionally biased stretch (basic and acidic residues) spans 1417–1428; the sequence is AETKDATKDNKD.

The protein belongs to the CLU family.

The protein resides in the cytoplasm. Its function is as follows. mRNA-binding protein involved in proper cytoplasmic distribution of mitochondria. The polypeptide is Protein clueless (Drosophila ananassae (Fruit fly)).